The primary structure comprises 279 residues: Large ribosomal subunit protein uL2 (279 aa).

Residues Pro-223–Lys-279 are disordered. Residues Pro-245–Ala-264 show a composition bias toward basic residues.

It belongs to the universal ribosomal protein uL2 family. In terms of assembly, part of the 50S ribosomal subunit. Forms a bridge to the 30S subunit in the 70S ribosome.

Functionally, one of the primary rRNA binding proteins. Required for association of the 30S and 50S subunits to form the 70S ribosome, for tRNA binding and peptide bond formation. It has been suggested to have peptidyltransferase activity; this is somewhat controversial. Makes several contacts with the 16S rRNA in the 70S ribosome. The chain is Large ribosomal subunit protein uL2 from Christiangramia forsetii (strain DSM 17595 / CGMCC 1.15422 / KT0803) (Gramella forsetii).